A 106-amino-acid polypeptide reads, in one-letter code: Guanyl-specific ribonuclease Th1 (106 aa).

2 cysteine pairs are disulfide-bonded: cysteine 5/cysteine 103 and cysteine 23/cysteine 84. Histidine 39 is a catalytic residue. Glutamate 58 serves as the catalytic Proton acceptor. Catalysis depends on histidine 92, which acts as the Proton donor.

It belongs to the ribonuclease N1/T1 family.

The catalysed reaction is [RNA] containing guanosine + H2O = an [RNA fragment]-3'-guanosine-3'-phosphate + a 5'-hydroxy-ribonucleotide-3'-[RNA fragment].. The chain is Guanyl-specific ribonuclease Th1 from Trichoderma harzianum (Hypocrea lixii).